The primary structure comprises 295 residues: MPSLKEVRNRIASVNSTQQITKAMKMVSAAKLRRAQDRAMKIRPYAEKLNGILQNIAASLEDGADNVYAEERELKRLLIVVVTSDRGLAGAFNANIVKAANALIEEKYSNLYQANKVDFICIGKKGAEAITKRGESANLEYQGLFQNLSFDTARGASEYVMNAYLTGKYDRVEVIYNEFKNVATQIIRTEQFLPIKGQALSAVKHSATEVDYIFEPSKEEIVKELIPKSLKVQFYKYLLESNASEHGARMTAMDKATENAKEMLKALKLTYNRSRQAAITKEILEIVGGAEALNN.

It belongs to the ATPase gamma chain family. F-type ATPases have 2 components, CF(1) - the catalytic core - and CF(0) - the membrane proton channel. CF(1) has five subunits: alpha(3), beta(3), gamma(1), delta(1), epsilon(1). CF(0) has three main subunits: a, b and c.

It localises to the cell inner membrane. Its function is as follows. Produces ATP from ADP in the presence of a proton gradient across the membrane. The gamma chain is believed to be important in regulating ATPase activity and the flow of protons through the CF(0) complex. This chain is ATP synthase gamma chain, found in Cytophaga hutchinsonii (strain ATCC 33406 / DSM 1761 / CIP 103989 / NBRC 15051 / NCIMB 9469 / D465).